The following is a 677-amino-acid chain: Methionine--tRNA ligase (677 aa).

A 'HIGH' region motif is present at residues 15–25 (PYANGSIHLGH). Residues C146, C149, C159, and C162 each contribute to the Zn(2+) site. The 'KMSKS' region signature appears at 333–337 (KMSKS). An ATP-binding site is contributed by K336. Residues 575 to 677 (DFAKIDLRVA…DGAKPGQQVK (103 aa)) form the tRNA-binding domain.

This sequence belongs to the class-I aminoacyl-tRNA synthetase family. MetG type 1 subfamily. Homodimer. Zn(2+) is required as a cofactor.

It is found in the cytoplasm. It catalyses the reaction tRNA(Met) + L-methionine + ATP = L-methionyl-tRNA(Met) + AMP + diphosphate. In terms of biological role, is required not only for elongation of protein synthesis but also for the initiation of all mRNA translation through initiator tRNA(fMet) aminoacylation. The chain is Methionine--tRNA ligase from Salmonella choleraesuis (strain SC-B67).